Here is a 175-residue protein sequence, read N- to C-terminus: Thioredoxin-like protein CITRX, chloroplastic (175 aa).

The transit peptide at 1–64 (MQAASLAFHP…KPPAVGKYVR (64 aa)) directs the protein to the chloroplast. The 102-residue stretch at 74–175 (AKEIQELIKG…MMRDIIDNDL (102 aa)) folds into the Thioredoxin domain. Active-site nucleophile residues include Cys98 and Cys101. Residues Cys98 and Cys101 are joined by a disulfide bond.

This sequence belongs to the thioredoxin family. Plant CITRX-type subfamily. In terms of assembly, interacts with Cf-9 resistance protein.

It is found in the plastid. The protein resides in the chloroplast. Probable thiol-disulfide oxidoreductase that may play a role in proper chloroplast development. The sequence is that of Thioredoxin-like protein CITRX, chloroplastic from Solanum lycopersicum (Tomato).